The chain runs to 762 residues: 5-methyltetrahydropteroyltriglutamate--homocysteine methyltransferase (762 aa).

5-methyltetrahydropteroyltri-L-glutamate contacts are provided by residues 17 to 20 (REWK) and Lys111. L-homocysteine is bound by residues 435–437 (IGS) and Glu488. Residues 435 to 437 (IGS) and Glu488 contribute to the L-methionine site. Residues 519–520 (RC) and Trp565 each bind 5-methyltetrahydropteroyltri-L-glutamate. Asp603 provides a ligand contact to L-homocysteine. Residue Asp603 participates in L-methionine binding. Glu609 contributes to the 5-methyltetrahydropteroyltri-L-glutamate binding site. Residues His645, Cys647, and Glu669 each coordinate Zn(2+). His698 (proton donor) is an active-site residue. A Zn(2+)-binding site is contributed by Cys730.

Belongs to the vitamin-B12 independent methionine synthase family. Requires Zn(2+) as cofactor.

It catalyses the reaction 5-methyltetrahydropteroyltri-L-glutamate + L-homocysteine = tetrahydropteroyltri-L-glutamate + L-methionine. It participates in amino-acid biosynthesis; L-methionine biosynthesis via de novo pathway; L-methionine from L-homocysteine (MetE route): step 1/1. In terms of biological role, catalyzes the transfer of a methyl group from 5-methyltetrahydrofolate to homocysteine resulting in methionine formation. The protein is 5-methyltetrahydropteroyltriglutamate--homocysteine methyltransferase of Bacillus thuringiensis subsp. konkukian (strain 97-27).